The following is a 298-amino-acid chain: uncharacterized protein (298 aa).

The interval 264-298 (APPPPLPCITTGPAALEDSPKASKANKGKKAKAKK) is disordered. The span at 287–298 (KANKGKKAKAKK) shows a compositional bias: basic residues.

This is an uncharacterized protein from Mus musculus (Mouse).